The following is an 844-amino-acid chain: RNA-directed RNA polymerase (844 aa).

A GTP-binding site is contributed by glycine 248–threonine 255. Residues methionine 384–alanine 588 form the RdRp catalytic domain. Positions glutamate 820–asparagine 844 are disordered. The segment covering lysine 833 to asparagine 844 has biased composition (basic residues).

Interacts with VP3 in the cytoplasm. Exists in multiple phosphorylated forms.

Its subcellular location is the virion. It catalyses the reaction RNA(n) + a ribonucleoside 5'-triphosphate = RNA(n+1) + diphosphate. In terms of biological role, RNA-dependent RNA polymerase which is found both free and covalently attached to the genomic RNA. May also contain guanylyl and methyl transferase activities. This is RNA-directed RNA polymerase (VP1) from Infectious pancreatic necrosis virus (strain Sp) (IPNV).